The following is a 367-amino-acid chain: tRNA-specific 2-thiouridylase MnmA (367 aa).

ATP contacts are provided by residues 13–20 and Met-39; that span reads GLSGGVDS. Residues 99–101 are interaction with target base in tRNA; that stretch reads NPD. Cys-104 acts as the Nucleophile in catalysis. A disulfide bridge connects residues Cys-104 and Cys-200. Gly-128 is an ATP binding site. The tract at residues 150–152 is interaction with tRNA; that stretch reads KDQ. The active-site Cysteine persulfide intermediate is the Cys-200. The interval 307–308 is interaction with tRNA; sequence RY.

Belongs to the MnmA/TRMU family.

The protein localises to the cytoplasm. It catalyses the reaction S-sulfanyl-L-cysteinyl-[protein] + uridine(34) in tRNA + AH2 + ATP = 2-thiouridine(34) in tRNA + L-cysteinyl-[protein] + A + AMP + diphosphate + H(+). In terms of biological role, catalyzes the 2-thiolation of uridine at the wobble position (U34) of tRNA, leading to the formation of s(2)U34. In Neisseria meningitidis serogroup C (strain 053442), this protein is tRNA-specific 2-thiouridylase MnmA.